Reading from the N-terminus, the 177-residue chain is PLAC8-like protein 1 (177 aa).

It belongs to the cornifelin family.

This is PLAC8-like protein 1 (Plac8l1) from Mus musculus (Mouse).